The primary structure comprises 433 residues: Protein translocase subunit SecY (433 aa).

Transmembrane regions (helical) follow at residues 17-37 (IIFT…PIPG), 71-91 (IFAL…LMSV), 117-137 (LTVL…ESMV), 141-161 (GPVV…TLVV), 184-204 (LIIF…MFEL), 212-232 (PLIA…IIFF), 268-288 (GVIP…LANF), 310-330 (YILL…AIVF), 366-386 (LTVI…LLMN), and 388-408 (YVIS…VVLD).

The protein belongs to the SecY/SEC61-alpha family. As to quaternary structure, component of the Sec protein translocase complex. Heterotrimer consisting of SecY, SecE and SecG subunits. The heterotrimers can form oligomers, although 1 heterotrimer is thought to be able to translocate proteins. Interacts with the ribosome. Interacts with SecDF, and other proteins may be involved. Interacts with SecA.

The protein resides in the cell inner membrane. The central subunit of the protein translocation channel SecYEG. Consists of two halves formed by TMs 1-5 and 6-10. These two domains form a lateral gate at the front which open onto the bilayer between TMs 2 and 7, and are clamped together by SecE at the back. The channel is closed by both a pore ring composed of hydrophobic SecY resides and a short helix (helix 2A) on the extracellular side of the membrane which forms a plug. The plug probably moves laterally to allow the channel to open. The ring and the pore may move independently. The protein is Protein translocase subunit SecY of Rickettsia typhi (strain ATCC VR-144 / Wilmington).